We begin with the raw amino-acid sequence, 162 residues long: NADH-quinone oxidoreductase subunit I (162 aa).

2 4Fe-4S ferredoxin-type domains span residues 53 to 83 (LRRY…IEAE) and 93 to 122 (TRYD…EGPN). Cys-63, Cys-66, Cys-69, Cys-73, Cys-102, Cys-105, Cys-108, and Cys-112 together coordinate [4Fe-4S] cluster.

This sequence belongs to the complex I 23 kDa subunit family. As to quaternary structure, NDH-1 is composed of 14 different subunits. Subunits NuoA, H, J, K, L, M, N constitute the membrane sector of the complex. [4Fe-4S] cluster serves as cofactor.

The protein localises to the cell inner membrane. It catalyses the reaction a quinone + NADH + 5 H(+)(in) = a quinol + NAD(+) + 4 H(+)(out). Functionally, NDH-1 shuttles electrons from NADH, via FMN and iron-sulfur (Fe-S) centers, to quinones in the respiratory chain. The immediate electron acceptor for the enzyme in this species is believed to be ubiquinone. Couples the redox reaction to proton translocation (for every two electrons transferred, four hydrogen ions are translocated across the cytoplasmic membrane), and thus conserves the redox energy in a proton gradient. The sequence is that of NADH-quinone oxidoreductase subunit I from Granulibacter bethesdensis (strain ATCC BAA-1260 / CGDNIH1).